The sequence spans 227 residues: Large ribosomal subunit protein uL3 (227 aa).

N5-methylglutamine is present on Gln-158.

The protein belongs to the universal ribosomal protein uL3 family. As to quaternary structure, part of the 50S ribosomal subunit. Forms a cluster with proteins L14 and L19. Post-translationally, methylated by PrmB.

Functionally, one of the primary rRNA binding proteins, it binds directly near the 3'-end of the 23S rRNA, where it nucleates assembly of the 50S subunit. The chain is Large ribosomal subunit protein uL3 from Polaromonas sp. (strain JS666 / ATCC BAA-500).